We begin with the raw amino-acid sequence, 375 residues long: MQKIVVYVYIYLFVQISVDPVALDGSSQPTENTEKDGLCNACTWRQNTKSSRIEAIKIQILSKLRLEQAPNISRDVIKQLLPKAPPLQELIDQYDVQRDDSSDGSLEDDDYHATTETIITMPTESDFLVQMEGKPKCCFFKFSSKIQYNKVVKAQLWIYLRQVQKPTTVFVQILRLIKPMKDGTRYTGIRSLKLDMNPGNGIWQSIDVKTVLQNWLKQPESNLGIEIKAFDENGRDLAVTFPGPGEDGLNPFLEVRVTDTPKRSRRDFGLDCDEHSTESRCCRYPLTVDFEAFGWDWIIAPKRYKANYCSGECEFVFLQKYPHTHLVHQANPRGSAGPCCTPTKMSPINMLYFNGKEQIIYGKIPAMVVDRCGCS.

Residues 1-23 (MQKIVVYVYIYLFVQISVDPVAL) form the signal peptide. Positions 24–266 (DGSSQPTENT…VTDTPKRSRR (243 aa)) are excised as a propeptide. The N-linked (GlcNAc...) asparagine glycan is linked to Asn-71. Cystine bridges form between Cys-272–Cys-282, Cys-281–Cys-340, Cys-309–Cys-372, and Cys-313–Cys-374.

The protein belongs to the TGF-beta family. As to quaternary structure, homodimer; disulfide-linked.

The protein resides in the secreted. Acts specifically as a negative regulator of skeletal muscle growth. This chain is Growth/differentiation factor 8 (MSTN), found in Coturnix coturnix (Common quail).